A 502-amino-acid chain; its full sequence is Cytochrome P450 71B10 (502 aa).

The chain crosses the membrane as a helical span at residues 1 to 21 (MTVLWFVSLILLISILLVAVK). Cys443 serves as a coordination point for heme.

This sequence belongs to the cytochrome P450 family. Heme serves as cofactor.

The protein resides in the membrane. This chain is Cytochrome P450 71B10 (CYP71B10), found in Arabidopsis thaliana (Mouse-ear cress).